The following is a 719-amino-acid chain: Putative RNA-binding protein involved in heterochromatin assembly (719 aa).

Residues 226–322 (KILYMNNLPP…NLANTKQPRV (97 aa)) form the RRM domain. Residue serine 345 is modified to Phosphoserine. The segment at 355–384 (RPGDWNCPSCGFSNFQRRTACFRCSFPAPS) adopts a RanBP2-type 1 zinc-finger fold. Residues 389–415 (HTANSNNNVNSSRNNLNNRVNSGSSSN) are disordered. The segment covering 392–415 (NSNNNVNSSRNNLNNRVNSGSSSN) has biased composition (low complexity). Serine 455 is subject to Phosphoserine. Residues 511–561 (NNNINGNGNGNGNNSNNNNNHNNNHNNNHHNGSINSNSNTNNNNNNNNGNN) form a disordered region. The segment at 581–610 (RAGDWKCSTCTYHNFAKNVVCLRCGGPKSI) adopts a RanBP2-type 2 zinc-finger fold. The span at 622-649 (DSSTFGPASRTPSNNNISVNTNGGSNAG) shows a compositional bias: polar residues. A disordered region spans residues 622-661 (DSSTFGPASRTPSNNNISVNTNGGSNAGRTDGNDNKGRDI). Position 630 is a phosphoserine (serine 630). Over residues 652-661 (DGNDNKGRDI) the composition is skewed to basic and acidic residues.

Its subcellular location is the chromosome. The protein resides in the nucleus. Its function is as follows. May play a role in chromatin organization. This is Putative RNA-binding protein involved in heterochromatin assembly from Saccharomyces cerevisiae (strain ATCC 204508 / S288c) (Baker's yeast).